A 379-amino-acid chain; its full sequence is Succinyl-diaminopimelate desuccinylase (379 aa).

His-70 lines the Zn(2+) pocket. The active site involves Asp-72. Position 103 (Asp-103) interacts with Zn(2+). Glu-137 (proton acceptor) is an active-site residue. 3 residues coordinate Zn(2+): Glu-138, Glu-166, and His-352.

Belongs to the peptidase M20A family. DapE subfamily. In terms of assembly, homodimer. The cofactor is Zn(2+). It depends on Co(2+) as a cofactor.

It catalyses the reaction N-succinyl-(2S,6S)-2,6-diaminopimelate + H2O = (2S,6S)-2,6-diaminopimelate + succinate. It functions in the pathway amino-acid biosynthesis; L-lysine biosynthesis via DAP pathway; LL-2,6-diaminopimelate from (S)-tetrahydrodipicolinate (succinylase route): step 3/3. Functionally, catalyzes the hydrolysis of N-succinyl-L,L-diaminopimelic acid (SDAP), forming succinate and LL-2,6-diaminopimelate (DAP), an intermediate involved in the bacterial biosynthesis of lysine and meso-diaminopimelic acid, an essential component of bacterial cell walls. This Paraburkholderia xenovorans (strain LB400) protein is Succinyl-diaminopimelate desuccinylase.